Here is a 124-residue protein sequence, read N- to C-terminus: Fluoride-specific ion channel FluC 2 (124 aa).

4 helical membrane passes run 9–29, 34–54, 67–87, and 99–119; these read LGIFLAAMLGGLVRYLVSTWL, DFPWGTLFVNYLGIFCLIYLV, LILALGTGFCGGLTTFSSLML, and LSLILYLLLSIGGGLLLAYYL. The Na(+) site is built by glycine 77 and threonine 80.

Belongs to the fluoride channel Fluc/FEX (TC 1.A.43) family.

Its subcellular location is the cell membrane. The enzyme catalyses fluoride(in) = fluoride(out). Na(+) is not transported, but it plays an essential structural role and its presence is essential for fluoride channel function. Fluoride-specific ion channel. Important for reducing fluoride concentration in the cell, thus reducing its toxicity. This chain is Fluoride-specific ion channel FluC 2, found in Streptococcus pneumoniae serotype 4 (strain ATCC BAA-334 / TIGR4).